Consider the following 241-residue polypeptide: Uracil-DNA glycosylase (241 aa).

D68 serves as the catalytic Proton acceptor.

Belongs to the uracil-DNA glycosylase (UDG) superfamily. UNG family.

The protein resides in the cytoplasm. The enzyme catalyses Hydrolyzes single-stranded DNA or mismatched double-stranded DNA and polynucleotides, releasing free uracil.. Its function is as follows. Excises uracil residues from the DNA which can arise as a result of misincorporation of dUMP residues by DNA polymerase or due to deamination of cytosine. This chain is Uracil-DNA glycosylase, found in Rhizobium meliloti (strain 1021) (Ensifer meliloti).